A 107-amino-acid chain; its full sequence is Transmembrane protein 213 (107 aa).

An N-terminal signal peptide occupies residues 1–27 (MQRLPAATRATLILSLAFASLHSACSA). Over 28–70 (EASSSNSSSLTAHHPDPGTLEQCLNVDFCPQAARCCRTGVDEY) the chain is Extracellular. Residues 71 to 91 (GWIAAAVGWSLWFLTLILLCV) form a helical membrane-spanning segment. Topologically, residues 92–107 (DKLMKLTPDEPKDLQA) are cytoplasmic.

It localises to the membrane. This chain is Transmembrane protein 213 (TMEM213), found in Homo sapiens (Human).